The sequence spans 166 residues: Photosystem I assembly protein Ycf3 (166 aa).

3 TPR repeats span residues 35–68 (AFTY…EIDA), 72–105 (SYML…NPRL), and 120–153 (GEQA…SPTS).

This sequence belongs to the Ycf3 family.

It localises to the plastid. Its subcellular location is the chloroplast thylakoid membrane. Functionally, essential for the assembly of the photosystem I (PSI) complex. May act as a chaperone-like factor to guide the assembly of the PSI subunits. The polypeptide is Photosystem I assembly protein Ycf3 (Bigelowiella natans (Pedinomonas minutissima)).